Consider the following 614-residue polypeptide: Probable ATP-dependent RNA helicase DDX5 (614 aa).

The span at 1-15 (MSGYSSDRDRGRDRG) shows a compositional bias: basic and acidic residues. Positions 1 to 39 (MSGYSSDRDRGRDRGFGAPRFGGSRAGPLSGKKFGNPGE) are disordered. A Phosphoserine modification is found at Ser24. The residue at position 32 (Lys32) is an N6-acetyllysine; alternate. Lys32 participates in a covalent cross-link: Glycyl lysine isopeptide (Lys-Gly) (interchain with G-Cter in SUMO2); alternate. N6-acetyllysine is present on residues Lys33 and Lys40. A Glycyl lysine isopeptide (Lys-Gly) (interchain with G-Cter in SUMO2) cross-link involves residue Lys45. Lys53 participates in a covalent cross-link: Glycyl lysine isopeptide (Lys-Gly) (interchain with G-Cter in SUMO2); alternate. Lys53 is covalently cross-linked (Glycyl lysine isopeptide (Lys-Gly) (interchain with G-Cter in SUMO); alternate). Residue Lys53 forms a Glycyl lysine isopeptide (Lys-Gly) (interchain with G-Cter in SUMO1); alternate linkage. Positions 94-122 (LNFYEANFPANVMDVIARQNFTEPTAIQA) match the Q motif motif. Residues 114–116 (FTE), Gln121, and 138–145 (AQTGSGKT) contribute to the ATP site. In terms of domain architecture, Helicase ATP-binding spans 125–300 (WPVALSGLDM…EDFLKDYIHI (176 aa)). N6-acetyllysine is present on Lys236. Positions 248–251 (DEAD) match the DEAD box motif. Tyr297 bears the Phosphotyrosine mark. One can recognise a Helicase C-terminal domain in the interval 328 to 475 (KLIRLMEEIM…AINPKLLQLV (148 aa)). Residues Lys340, Lys343, Lys388, Lys391, Lys411, Lys437, Lys451, and Lys470 each participate in a glycyl lysine isopeptide (Lys-Gly) (interchain with G-Cter in SUMO2) cross-link. The interval 477–504 (DRGSGRSRGRGGMKDDRRDRYSAGKRGG) is disordered. A transactivation domain region spans residues 477 to 614 (DRGSGRSRGR…GYPMPTGYSQ (138 aa)). A Phosphoserine modification is found at Ser480. Over residues 488–498 (GMKDDRRDRYS) the composition is skewed to basic and acidic residues. Ser520 is subject to Phosphoserine. Lys523 is covalently cross-linked (Glycyl lysine isopeptide (Lys-Gly) (interchain with G-Cter in SUMO2)).

Belongs to the DEAD box helicase family. DDX5/DBP2 subfamily. Identified in the spliceosome C complex. Component of a ribonucleoprotein complex containing mRNAs and RNA-binding proteins including DDX5, HNRNPH2 and SRSF1 as well as splicing regulator ARVCF. Interacts with RBM4; the interaction occurs in an RNA-independent manner. Interacts with AGO1 and AGO2. Interacts with ESR1, AR, EP300, CREBBP, POLR2A, TP53, RUNX2 and HDAC1. Self-associates. Interacts with DDX17. Interacts with BRDT. The large PER complex involved in the repression of transcriptional termination is composed of at least PER2, CDK9, DDX5, DHX9, NCBP1 and POLR2A (active). Interacts with DHX36; this interaction occurs in a RNA-dependent manner. Interacts with NUPR1. Interacts with ERCC6. Interacts with DDX3X in the cytoplasm; this interaction may be more efficient when both proteins are unphosphorylated. In terms of processing, arg-502 is dimethylated, probably to asymmetric dimethylarginine. Sumoylated; sumoylation, promoted by PIAS1, promotes interaction with HDAC1 and transcriptional repression activity. Sumoylation also significantly increases stability, and reduces polyubiquitination. Post-translationally, polyubiquitinated, leading to proteasomal degradation. In terms of processing, weakly phosphorylated in the G1/S phase of the cell cycle and much more at G2/M, especially at Thr and Tyr residues.

It localises to the nucleus. Its subcellular location is the nucleolus. It is found in the nucleus speckle. The protein resides in the cytoplasm. It carries out the reaction ATP + H2O = ADP + phosphate + H(+). In terms of biological role, involved in the alternative regulation of pre-mRNA splicing; its RNA helicase activity is necessary for increasing tau exon 10 inclusion and occurs in a RBM4-dependent manner. Binds to the tau pre-mRNA in the stem-loop region downstream of exon 10. The rate of ATP hydrolysis is highly stimulated by single-stranded RNA. Involved in transcriptional regulation; the function is independent of the RNA helicase activity. Transcriptional coactivator for androgen receptor AR but probably not ESR1. Synergizes with DDX17 and SRA1 RNA to activate MYOD1 transcriptional activity and involved in skeletal muscle differentiation. Transcriptional coactivator for p53/TP53 and involved in p53/TP53 transcriptional response to DNA damage and p53/TP53-dependent apoptosis. Transcriptional coactivator for RUNX2 and involved in regulation of osteoblast differentiation. Acts as a transcriptional repressor in a promoter-specific manner; the function probably involves association with histone deacetylases, such as HDAC1. As component of a large PER complex is involved in the inhibition of 3' transcriptional termination of circadian target genes such as PER1 and NR1D1 and the control of the circadian rhythms. The protein is Probable ATP-dependent RNA helicase DDX5 (DDX5) of Homo sapiens (Human).